The primary structure comprises 192 residues: uncharacterized protein (192 aa).

A helical; Signal-anchor transmembrane segment spans residues 7 to 29; sequence FIHSISGGSSLLSASEVFASAFF. Residues 51–67 traverse the membrane as a helical segment; it reads YFLCVLVSTFLNSLVII.

It is found in the membrane. This is an uncharacterized protein from Saccharomyces cerevisiae (strain ATCC 204508 / S288c) (Baker's yeast).